Reading from the N-terminus, the 69-residue chain is Alpha-conotoxin-like Tx1 (69 aa).

The signal sequence occupies residues 1-21; that stretch reads MGMRMMFVVFLLVVLASTVVS. The propeptide occupies 22–49; that stretch reads STSGRRAFHGRNAAAKASGLVSLTDRRP. Cystine bridges form between Cys-51-Cys-57 and Cys-52-Cys-65. The segment at 53-55 is ser-Xaa-Pro motif, crucial for potent interaction with nAChR; it reads SDP. At Gly-66 the chain carries Glycine amide.

The protein belongs to the conotoxin A superfamily. Expressed by the venom duct.

The protein localises to the secreted. Its function is as follows. Alpha-conotoxins act on postsynaptic membranes, they bind to the nicotinic acetylcholine receptors (nAChR) and thus inhibit them. This chain is Alpha-conotoxin-like Tx1, found in Conus textile (Cloth-of-gold cone).